The following is a 236-amino-acid chain: Dense granule protein 7 (236 aa).

The first 26 residues, 1-26 (MARHAIFSALCVLGLVAAALPQFATA), serve as a signal peptide directing secretion. Positions 45–106 (DGQAPVDSLR…EVHFRKRGVR (62 aa)) are disordered. Residues 70–80 (TTSMDKASVES) are compositionally biased toward polar residues. Residues 147 to 236 (AVGMGASYFA…SGEDGEDARQ (90 aa)) are required for dimerization, interactions with liposomes and liposome tubulation. The helical transmembrane segment at 181–201 (VGTVLGFAALAAAAAFLGMGL) threads the bilayer. Residues 208-236 (FSPRKNRSRQPALEQEVPESGEDGEDARQ) form a disordered region. N-linked (GlcNAc...) asparagine glycosylation occurs at Asn213. Residues 223–236 (EVPESGEDGEDARQ) show a composition bias toward acidic residues.

The protein belongs to the Gra7 family. As to quaternary structure, homodimer. Can form higher order homooligomers in a lipid-stimulated manner. Component of a complex at least composed of ROP18, GRA7 and ROP2. Interacts with ROP5. Interacts with ROP18 in the absence of ROP5. Interacts with mouse IRGA6/IIGP1 in GTP-dependent manner; the interaction results in faster turnover of the GTP-activated IRGA6/IIGP1 oligomer. Interacts with mouse TRAF6 (via N-terminal RING domain); the interaction plays a role in GRA7-induced pro-inflammatory cytokine production in mouse macrophages.

It is found in the secreted. Its subcellular location is the parasitophorous vacuole lumen. The protein localises to the parasitophorous vacuole membrane. The protein resides in the cytoplasm. It localises to the host cytoplasm. It is found in the cytoplasmic vesicle. Its subcellular location is the secretory vesicle. Functionally, binds lipid bilayers, sequesters host endocytic organelles in the parasitophorous vacuole space, and causes their deformation and remodeling. Plays a role in nutrient acquisition from the host. In complex with ROP18, targets immunity-related GTPases (IRGs) to prevent IRG-mediated parasite killing by mouse cells. Important component within a kinase complex, contributing to phosphorylation of mouse IRGA6/IIGP1, an immunity-related GTPase that protects mice from infection by certain intracellular pathogens, by Toxoplasma gondii ROP5 and ROP18. Induces pro-inflammatory cytokine production in host macrophages. Activates host pro-inflammatory signaling pathways in a MyD88-dependent manner. Triggers generation of reactive oxygen species (ROS) in host cells. Activates MAPK pathway in host cells. Activates host NF-kappa-B signaling pathway by interacting with TRAF6 and modulating the 'Lys-63'-linked polyubiquitination of TRAF6. This chain is Dense granule protein 7, found in Toxoplasma gondii.